Reading from the N-terminus, the 329-residue chain is Protein STRICTOSIDINE SYNTHASE-LIKE 11 (329 aa).

The N-terminal stretch at 1-23 (MMRSFVSLISLLLLLSFSSSVLS) is a signal peptide. Asn37 and Asn79 each carry an N-linked (GlcNAc...) asparagine glycan.

This sequence belongs to the strictosidine synthase family.

The protein localises to the vacuole. The catalysed reaction is 3alpha(S)-strictosidine + H2O = secologanin + tryptamine. It participates in alkaloid biosynthesis; 3alpha(S)-strictosidine biosynthesis; 3alpha(S)-strictosidine from secologanin and tryptamine: step 1/1. Functionally, catalyzes the stereospecific condensation of tryptamine with secologanin to form strictosidine, the key intermediate of indole alkaloid biosynthesis. The sequence is that of Protein STRICTOSIDINE SYNTHASE-LIKE 11 from Arabidopsis thaliana (Mouse-ear cress).